The primary structure comprises 880 residues: Alanine--tRNA ligase (880 aa).

Zn(2+) contacts are provided by H568, H572, C670, and H674.

Belongs to the class-II aminoacyl-tRNA synthetase family. Zn(2+) serves as cofactor.

The protein localises to the cytoplasm. The catalysed reaction is tRNA(Ala) + L-alanine + ATP = L-alanyl-tRNA(Ala) + AMP + diphosphate. In terms of biological role, catalyzes the attachment of alanine to tRNA(Ala) in a two-step reaction: alanine is first activated by ATP to form Ala-AMP and then transferred to the acceptor end of tRNA(Ala). Also edits incorrectly charged Ser-tRNA(Ala) and Gly-tRNA(Ala) via its editing domain. In Exiguobacterium sibiricum (strain DSM 17290 / CCUG 55495 / CIP 109462 / JCM 13490 / 255-15), this protein is Alanine--tRNA ligase.